The primary structure comprises 857 residues: DNA gyrase subunit A (857 aa).

One can recognise a Topo IIA-type catalytic domain in the interval 39–507 (LPDVRDGLKP…YEGDMSIEDL (469 aa)). The O-(5'-phospho-DNA)-tyrosine intermediate role is filled by Tyr-127. A GyrA-box motif is present at residues 534–540 (QKRGGKG). Residues 825–857 (REAEEVDGDVAVDETAEGAATTGTDEGEAPSAE) are disordered. Acidic residues predominate over residues 828–840 (EEVDGDVAVDETA).

This sequence belongs to the type II topoisomerase GyrA/ParC subunit family. As to quaternary structure, heterotetramer, composed of two GyrA and two GyrB chains. In the heterotetramer, GyrA contains the active site tyrosine that forms a transient covalent intermediate with DNA, while GyrB binds cofactors and catalyzes ATP hydrolysis.

It is found in the cytoplasm. The catalysed reaction is ATP-dependent breakage, passage and rejoining of double-stranded DNA.. In terms of biological role, a type II topoisomerase that negatively supercoils closed circular double-stranded (ds) DNA in an ATP-dependent manner to modulate DNA topology and maintain chromosomes in an underwound state. Negative supercoiling favors strand separation, and DNA replication, transcription, recombination and repair, all of which involve strand separation. Also able to catalyze the interconversion of other topological isomers of dsDNA rings, including catenanes and knotted rings. Type II topoisomerases break and join 2 DNA strands simultaneously in an ATP-dependent manner. The protein is DNA gyrase subunit A of Streptomyces coelicolor (strain ATCC BAA-471 / A3(2) / M145).